Reading from the N-terminus, the 489-residue chain is WPP domain-interacting protein 1 (489 aa).

Positions Ser49–Val73 are disordered. 3 short sequence motifs (nuclear localization signal) span residues Arg80–Lys81, Arg83–Arg84, and Lys104–Arg105. The segment at Pro195–Ser264 is disordered. The span at Gly215–Asn224 shows a compositional bias: basic and acidic residues. A coiled-coil region spans residues Glu323 to Ile446. One can recognise a KASH domain in the interval Ser459–Thr489. The helical transmembrane segment at Tyr460–Leu480 threads the bilayer.

As to quaternary structure, homodimer and heterodimer with WIP2. Component of Ran complexes at least composed of WIT1 or WIT2, RANGAP1 or RANGAP2, and WIP1 or WIP2 or WIP3. Interacts with RANGAP1, RANGAP2, WPP1/MAF1, and WPP2/MAF2. Interacts with SUN1 and SUN2. Interacts with KIN1. Core component of the LINC complex which is composed of inner nuclear membrane SUN domain-containing proteins coupled to outer nuclear membrane WIP and WIT proteins. The LINC complex also involves nucleoskeletal proteins CRWN/LINC and possibly KAKU4 and the cytoskeletal myosin KAKU1. Interacts with WIT1 and SUN2. Interacts with WIT2. Interacts with SUN3. Expressed in seedlings, roots, stems, leaves, and flowers.

The protein resides in the nucleus envelope. Its subcellular location is the nucleus membrane. Mediates and enhances the nuclear envelope docking of RANGAP proteins mediated by WIT1 and WIT2 in the undifferentiated cells of root tips. As component of the SUN-WIP-WIT2-KAKU1 complex, mediates the transfer of cytoplasmic forces to the nuclear envelope (NE), leading to nuclear shape changes. This Arabidopsis thaliana (Mouse-ear cress) protein is WPP domain-interacting protein 1 (WIP1).